Reading from the N-terminus, the 59-residue chain is UPF0391 membrane protein AZC_4184 (59 aa).

2 consecutive transmembrane segments (helical) span residues 4-24 (WALTFLVVAIIAAVLGFTAVA) and 30-50 (IAKIIFYVAIVLFLISAVMGF).

The protein belongs to the UPF0391 family.

It is found in the cell membrane. The chain is UPF0391 membrane protein AZC_4184 from Azorhizobium caulinodans (strain ATCC 43989 / DSM 5975 / JCM 20966 / LMG 6465 / NBRC 14845 / NCIMB 13405 / ORS 571).